A 772-amino-acid polypeptide reads, in one-letter code: Ribosomal protein S6 kinase alpha-4 (772 aa).

In terms of domain architecture, Protein kinase 1 spans 33 to 301; the sequence is FELLKVLGTG…AQEVRNHPFF (269 aa). ATP contacts are provided by residues 39–47 and K65; that span reads LGTGAYGKV. D161 (proton acceptor) is an active-site residue. S196 bears the Phosphoserine; by autocatalysis mark. Residues 302-371 form the AGC-kinase C-terminal domain; sequence QGLDWVALAA…VAPSILFDHN (70 aa). S343 carries the phosphoserine; by MAPK1, MAPK3 and MAPK14 modification. The residue at position 347 (S347) is a Phosphoserine. Residues S360 and S365 each carry the phosphoserine; by autocatalysis modification. A Protein kinase 2 domain is found at 411-674; the sequence is DLREPALGQG…LEGLRGSSWL (264 aa). Residues 417–425 and K440 contribute to the ATP site; that span reads LGQGSFSVC. The active-site Proton acceptor is D530. Position 542 is a phosphothreonine (T542). T568 is modified (phosphothreonine; by MAPK1, MAPK3 and MAPK14). Phosphoserine is present on residues S634 and S678. Disordered regions lie at residues 673–696 and 728–772; these read WLQD…SSGP and AKRR…LPPS. Position 687 is a phosphothreonine (T687). The interval 725–772 is required for nuclear targeting and association with MAPK14; that stretch reads APLAKRRKQKLRSATASRRGSPAPANPGRAPVASKGAPRRANGPLPPS. S737 carries the phosphoserine; by autocatalysis modification. Position 745 is a phosphoserine (S745).

The protein belongs to the protein kinase superfamily. AGC Ser/Thr protein kinase family. S6 kinase subfamily. In terms of assembly, forms a complex with either MAPK1/ERK2 or MAPK3/ERK1 in quiescent cells which transiently dissociates following mitogenic stimulation. Also associates with MAPK14/p38-alpha. Activated RPS6KA4 associates with and phosphorylates the NF-kappa-B p65 subunit RELA. It depends on Mg(2+) as a cofactor. In terms of processing, ser-343 and Thr-568 phosphorylation is required for kinase activity. Ser-343 and Ser-196 are autophosphorylated by the C-terminal kinase domain, and their phosphorylation is essential for the catalytic activity of the N-terminal kinase domain. Phosphorylated at Ser-343, Thr-568 and Thr-687 by MAPK1/ERK2, MAPK3/ERK1 and MAPK14/p38-alpha. Autophosphorylated at Ser-737 and Ser-745 by the N-terminal kinase domain.

It localises to the nucleus. The catalysed reaction is L-seryl-[protein] + ATP = O-phospho-L-seryl-[protein] + ADP + H(+). It carries out the reaction L-threonyl-[protein] + ATP = O-phospho-L-threonyl-[protein] + ADP + H(+). Its activity is regulated as follows. Activated by phosphorylation at Ser-343, Thr-568 and Thr-687 by MAPK1/ERK2, MAPK3/ERK1 and MAPK14/p38-alpha, and by further autophosphorylation of Ser-196, Ser-360 and Ser-365 by the activated C-terminal kinase domain. Its function is as follows. Serine/threonine-protein kinase that is required for the mitogen or stress-induced phosphorylation of the transcription factors CREB1 and ATF1 and for the regulation of the transcription factor RELA, and that contributes to gene activation by histone phosphorylation and functions in the regulation of inflammatory genes. Phosphorylates CREB1 and ATF1 in response to mitogenic or stress stimuli such as UV-C irradiation, epidermal growth factor (EGF) and anisomycin. Plays an essential role in the control of RELA transcriptional activity in response to TNF. Phosphorylates 'Ser-10' of histone H3 in response to mitogenics, stress stimuli and EGF, which results in the transcriptional activation of several immediate early genes, including proto-oncogenes c-fos/FOS and c-jun/JUN. May also phosphorylate 'Ser-28' of histone H3. Mediates the mitogen- and stress-induced phosphorylation of high mobility group protein 1 (HMGN1/HMG14). In lipopolysaccharide-stimulated primary macrophages, acts downstream of the Toll-like receptor TLR4 to limit the production of pro-inflammatory cytokines. Functions probably by inducing transcription of the MAP kinase phosphatase DUSP1 and the anti-inflammatory cytokine interleukin 10 (IL10), via CREB1 and ATF1 transcription factors. The chain is Ribosomal protein S6 kinase alpha-4 (RPS6KA4) from Homo sapiens (Human).